We begin with the raw amino-acid sequence, 339 residues long: Ureidoglycine carbamoyltransferase (339 aa).

It belongs to the aspartate/ornithine carbamoyltransferase superfamily. As to quaternary structure, homodimer.

It catalyses the reaction (S)-2-ureidoglycine + carbamoyl phosphate = allantoate + phosphate + H(+). It functions in the pathway purine metabolism. Its function is as follows. Catalyzes the phosphorolysis of allantoate to ureidoglycine and carbamoyl phosphate. Is likely involved in a purine degradation pathway. In Rubrobacter xylanophilus (strain DSM 9941 / JCM 11954 / NBRC 16129 / PRD-1), this protein is Ureidoglycine carbamoyltransferase.